Here is a 149-residue protein sequence, read N- to C-terminus: D-aminoacyl-tRNA deacylase (149 aa).

Residues 137–138 (GP) carry the Gly-cisPro motif, important for rejection of L-amino acids motif.

It belongs to the DTD family. Homodimer.

It localises to the cytoplasm. The enzyme catalyses glycyl-tRNA(Ala) + H2O = tRNA(Ala) + glycine + H(+). It carries out the reaction a D-aminoacyl-tRNA + H2O = a tRNA + a D-alpha-amino acid + H(+). Its function is as follows. An aminoacyl-tRNA editing enzyme that deacylates mischarged D-aminoacyl-tRNAs. Also deacylates mischarged glycyl-tRNA(Ala), protecting cells against glycine mischarging by AlaRS. Acts via tRNA-based rather than protein-based catalysis; rejects L-amino acids rather than detecting D-amino acids in the active site. By recycling D-aminoacyl-tRNA to D-amino acids and free tRNA molecules, this enzyme counteracts the toxicity associated with the formation of D-aminoacyl-tRNA entities in vivo and helps enforce protein L-homochirality. This Clostridium perfringens (strain ATCC 13124 / DSM 756 / JCM 1290 / NCIMB 6125 / NCTC 8237 / Type A) protein is D-aminoacyl-tRNA deacylase.